The following is a 147-amino-acid chain: Acidic phospholipase A2 beta-bungarotoxin A4 chain (147 aa).

An N-terminal signal peptide occupies residues 1-19; it reads MNPAHLLVLSAVCVSLLGA. Positions 20 to 27 are excised as a propeptide; the sequence is ANIPPQHL. 6 disulfides stabilise this stretch: Cys-54-Cys-146, Cys-56-Cys-72, Cys-71-Cys-127, Cys-78-Cys-120, Cys-88-Cys-113, and Cys-106-Cys-118. Positions 55, 57, and 59 each coordinate Ca(2+). His-75 is a catalytic residue. Residue Asp-76 coordinates Ca(2+). Asp-121 is an active-site residue.

This sequence belongs to the phospholipase A2 family. Group I subfamily. D49 sub-subfamily. As to quaternary structure, heterodimer; disulfide-linked. The A chains have phospholipase A2 activity and the B chains show homology with the basic protease inhibitors. It depends on Ca(2+) as a cofactor. In terms of tissue distribution, expressed by the venom gland.

Its subcellular location is the secreted. It carries out the reaction a 1,2-diacyl-sn-glycero-3-phosphocholine + H2O = a 1-acyl-sn-glycero-3-phosphocholine + a fatty acid + H(+). In terms of biological role, snake venom phospholipase A2 (PLA2) that inhibits neuromuscular transmission by blocking acetylcholine release from the nerve termini. PLA2 catalyzes the calcium-dependent hydrolysis of the 2-acyl groups in 3-sn-phosphoglycerides. The sequence is that of Acidic phospholipase A2 beta-bungarotoxin A4 chain from Bungarus multicinctus (Many-banded krait).